Consider the following 625-residue polypeptide: Grainyhead-like protein 2 homolog (625 aa).

Residues Met1–Asp93 are transcription activation. Disordered regions lie at residues Ala198 to Asp222 and Glu428 to Gly452. In terms of domain architecture, Grh/CP2 DB spans Gly244–Ile482. Over residues Gln440–Asp451 the composition is skewed to polar residues.

This sequence belongs to the grh/CP2 family. Grainyhead subfamily. As to quaternary structure, homodimer, also forms heterodimers with GRHL1 or GRHL3.

It localises to the nucleus. It is found in the membrane. Its function is as follows. Transcription factor playing an important role in primary neurulation and in epithelial development. Binds directly to the consensus DNA sequence 5'-AACCGGTT-3' acting as an activator and repressor on distinct target genes. During embryogenesis, plays unique and cooperative roles with GRHL3 in establishing distinct zones of primary neurulation. Essential for closure 3 (rostral end of the forebrain), functions cooperatively with GRHL3 in closure 2 (forebrain/midbrain boundary) and posterior neuropore closure. Regulates epithelial morphogenesis acting as a target gene-associated transcriptional activator of apical junctional complex components. Up-regulates of CLDN3 and CLDN4, as well as of RAB25, which increases the CLDN4 protein and its localization at tight junctions. Comprises an essential component of the transcriptional machinery that establishes appropriate expression levels of CLDN4 and CDH1 in different types of epithelia. Exhibits functional redundancy with GRHL3 in epidermal morphogenetic events such as eyelid fusion and epidermal wound repair. In lung, forms a regulatory loop with NKX2-1 that coordinates lung epithelial cell morphogenesis and differentiation. In keratinocytes, plays a role in telomerase activation during cellular proliferation, regulates TERT expression by binding to TERT promoter region and inhibiting DNA methylation at the 5'-CpG island, possibly by interfering with DNMT1 enzyme activity. In addition, impairs keratinocyte differentiation and epidermal function by inhibiting the expression of genes clustered at the epidermal differentiation complex (EDC) as well as GRHL1 and GRHL3 through epigenetic mechanisms. This chain is Grainyhead-like protein 2 homolog (Grhl2), found in Mus musculus (Mouse).